The chain runs to 301 residues: Rhodopsin (301 aa).

The Extracellular segment spans residues 1-18 (LHMIHLHWYQYPPMNPMM). Residues 19 to 43 (YPLLLIFMLFTGILCLAGNFVTIWV) traverse the membrane as a helical segment. At 44 to 55 (FMNTKSLRTPAN) the chain is on the cytoplasmic side. A helical membrane pass occupies residues 56 to 78 (LLVVNLAMSDFLMMFTMFPPMMV). Over 79-92 (TCYYHTWTLGPTFC) the chain is Extracellular. C92 and C169 are joined by a disulfide. A helical membrane pass occupies residues 93–115 (QVYAFLGNLCGCASIWTMVFITF). Residues 116-118 (DRY) carry the 'Ionic lock' involved in activated form stabilization motif. Residues 116 to 134 (DRYNVIVKGVAGEPLSNKK) lie on the Cytoplasmic side of the membrane. A helical membrane pass occupies residues 135-155 (AAMWILSVWVLSTAWCMAPFF). Over 156 to 182 (GWNSYVPEGNLTGCGTDYLSEDILSRS) the chain is Extracellular. N165 carries an N-linked (GlcNAc...) asparagine glycan. The chain crosses the membrane as a helical span at residues 183-204 (YLYIYSTWVYFLPLTITIYCYV). Residues 205–245 (FIIKAVAAHEKGMRDQAKKMGIKSLRNEEAQKTSAECRLAK) lie on the Cytoplasmic side of the membrane. The chain crosses the membrane as a helical span at residues 246 to 267 (IAMTTVALWFIAWTPYLLINWV). Over 268–278 (GMFARSYLSPV) the chain is Extracellular. Residues 279–300 (YTIWGYVFAKANAVYNPIVYAI) traverse the membrane as a helical segment. The residue at position 288 (K288) is an N6-(retinylidene)lysine.

This sequence belongs to the G-protein coupled receptor 1 family. Opsin subfamily. Homodimer. Interacts with GNAQ. Post-translationally, contains one covalently linked retinal chromophore.

The protein localises to the cell projection. It is found in the rhabdomere membrane. Photoreceptor required for image-forming vision at low light intensity. Can use both retinal and 3-dehydroretinal as visual pigment. Light-induced isomerization of 11-cis to all-trans retinal triggers a conformational change that activates signaling via G-proteins. Signaling via GNAQ probably mediates the activation of phospholipase C. This chain is Rhodopsin (RHO), found in Faxonius virilis (Virile crayfish).